Reading from the N-terminus, the 78-residue chain is Colicin-V immunity protein (78 aa).

Functionally, this protein is able to protect a cell, which harbors the plasmid ColV encoding colicin V, against colicin V. The sequence is that of Colicin-V immunity protein (cvi) from Escherichia coli.